The primary structure comprises 391 residues: Casein kinase II subunit alpha 3 (391 aa).

Residues Tyr39–Phe324 enclose the Protein kinase domain. ATP-binding positions include Leu45–Val53 and Lys68. Asp156 (proton acceptor) is an active-site residue.

The protein belongs to the protein kinase superfamily. Ser/Thr protein kinase family. CK2 subfamily. Heterotetramer composed of two catalytic subunits (alpha chain and/or alpha' chain) and two regulatory subunits (beta chains). Interacts with PML. As to expression, detected in blood platelets and megakaryocyte cell lines. Poorly expressed in lung. Highly expressed in lung tumor tissues.

It carries out the reaction L-seryl-[protein] + ATP = O-phospho-L-seryl-[protein] + ADP + H(+). The catalysed reaction is L-threonyl-[protein] + ATP = O-phospho-L-threonyl-[protein] + ADP + H(+). In terms of biological role, probable catalytic subunit of a constitutively active serine/threonine-protein kinase complex that phosphorylates a large number of substrates containing acidic residues C-terminal to the phosphorylated serine or threonine. Amplification-dependent oncogene; promotes cell proliferation and tumorigenesis by down-regulating expression of the tumor suppressor protein, PML. May play a role in the pathogenesis of the lung cancer development and progression. This is Casein kinase II subunit alpha 3 (CSNK2A3) from Homo sapiens (Human).